An 82-amino-acid chain; its full sequence is RNA-binding protein BH0128 (82 aa).

It belongs to the eukaryotic ribosomal protein eL8 family.

This is RNA-binding protein BH0128 from Halalkalibacterium halodurans (strain ATCC BAA-125 / DSM 18197 / FERM 7344 / JCM 9153 / C-125) (Bacillus halodurans).